The following is a 747-amino-acid chain: MVNQQTLTLRGMGCAACAGRIEALIQALPGVQECSVNFGAEQAQVCYDPALTQVAAIQAAIEAAGYHAFPLQDPWDNEVEAQERHRRARSQRQLAQRVWVSGLIASLLVIGSLPMMLGISIPGIPMWLHHPGLQLGLTLPVLWAGRSFFINAWKAFRQNTATMDTLVAVGTGAAFLYSLAVTLFPQWLTRQGLPPDVYYEAIAVIIALLLLGRSLEERAKGQTSAAIRQLIGLQAKTARVLRQGQELTLPITEVQVEDWVRVRPGEKVPVDGEVIDGRSTVDESMVTGESLPVQKQVGDEVIGATLNKTGSLTIRATRVGRETFLAQIVQLVQQAQASKAPIQRLADQVTGWFVPAVIAIAILTFVLWFNWIGNVTLALITAVGVLIIACPCALGLATPTSIMVGTGKGAEYGILIKSAESLELAQTIQTVILDKTGTLTQGQPSVTDFLAIGDRDQQQTLLGWAASLENYSEHPLAEAIVRYGEAQGITLSTVTDFEAIPGSGVQGQVEGIWLQIGTQRWLGELGIETSALQNQWEDWEAAGKTVVGVAADGHLQAILSIADQLKPSSVAVVRSLQRLGLQVVMLTGDNRRTADAIAQAVGITQVLAEVRPDQKAAQVAQLQSRGQVVAMVGDGINDAPALAQADVGIAIGTGTDVAIAASDITLISGDLQGIVTAIQLSRATMTNIRQNLFFAFIYNVAGIPIAAGILYPLLGWLLSPMLAGAAMAFSSVSVVTNALRLRQFQPR.

Residues 1–101 are Cytoplasmic-facing; sequence MVNQQTLTLR…RQLAQRVWVS (101 aa). The HMA domain occupies 3–69; the sequence is NQQTLTLRGM…AIEAAGYHAF (67 aa). A metal cation contacts are provided by Cys-14 and Cys-17. The helical transmembrane segment at 102-122 threads the bilayer; it reads GLIASLLVIGSLPMMLGISIP. Residues 123–132 lie on the Extracellular side of the membrane; that stretch reads GIPMWLHHPG. A helical membrane pass occupies residues 133-151; sequence LQLGLTLPVLWAGRSFFIN. The Cytoplasmic portion of the chain corresponds to 152–158; it reads AWKAFRQ. A helical membrane pass occupies residues 159 to 179; it reads NTATMDTLVAVGTGAAFLYSL. Residues 180–199 are Extracellular-facing; sequence AVTLFPQWLTRQGLPPDVYY. A helical membrane pass occupies residues 200–220; sequence EAIAVIIALLLLGRSLEERAK. Over 221 to 348 the chain is Cytoplasmic; that stretch reads GQTSAAIRQL…KAPIQRLADQ (128 aa). A helical membrane pass occupies residues 349–371; that stretch reads VTGWFVPAVIAIAILTFVLWFNW. The Extracellular portion of the chain corresponds to 372–378; sequence IGNVTLA. The helical transmembrane segment at 379–396 threads the bilayer; it reads LITAVGVLIIACPCALGL. The Cytoplasmic segment spans residues 397–688; that stretch reads ATPTSIMVGT…QLSRATMTNI (292 aa). Asp-434 functions as the 4-aspartylphosphate intermediate in the catalytic mechanism. Mg(2+) contacts are provided by Asp-634 and Asp-638. Residues 689 to 708 form a helical membrane-spanning segment; sequence RQNLFFAFIYNVAGIPIAAG. The Extracellular segment spans residues 709–720; the sequence is ILYPLLGWLLSP. The chain crosses the membrane as a helical span at residues 721-739; the sequence is MLAGAAMAFSSVSVVTNAL. Residues 740–747 are Cytoplasmic-facing; the sequence is RLRQFQPR.

The protein belongs to the cation transport ATPase (P-type) (TC 3.A.3) family. Type IB subfamily.

Its subcellular location is the cell membrane. It catalyses the reaction Cu(+)(in) + ATP + H2O = Cu(+)(out) + ADP + phosphate + H(+). Its function is as follows. May play a role in the osmotic adaptation. In Synechococcus elongatus (strain ATCC 33912 / PCC 7942 / FACHB-805) (Anacystis nidulans R2), this protein is Probable copper-transporting ATPase PacS (pacS).